The sequence spans 109 residues: uncharacterized protein (109 aa).

The chain crosses the membrane as a helical span at residues 90-107 (IICNFWGSLLGVGIAFYQ).

Its subcellular location is the membrane. This is an uncharacterized protein from Saccharomyces cerevisiae (strain ATCC 204508 / S288c) (Baker's yeast).